A 350-amino-acid chain; its full sequence is Uroporphyrinogen decarboxylase (350 aa).

Residues 23–27 (RQAGR), aspartate 73, tyrosine 150, threonine 205, and histidine 322 contribute to the substrate site.

This sequence belongs to the uroporphyrinogen decarboxylase family. In terms of assembly, homodimer.

The protein resides in the cytoplasm. It carries out the reaction uroporphyrinogen III + 4 H(+) = coproporphyrinogen III + 4 CO2. It functions in the pathway porphyrin-containing compound metabolism; protoporphyrin-IX biosynthesis; coproporphyrinogen-III from 5-aminolevulinate: step 4/4. Its function is as follows. Catalyzes the decarboxylation of four acetate groups of uroporphyrinogen-III to yield coproporphyrinogen-III. The sequence is that of Uroporphyrinogen decarboxylase from Methylococcus capsulatus (strain ATCC 33009 / NCIMB 11132 / Bath).